Reading from the N-terminus, the 356-residue chain is Mannonate dehydratase (356 aa).

This sequence belongs to the mannonate dehydratase family. Requires Fe(2+) as cofactor. Mn(2+) is required as a cofactor.

It catalyses the reaction D-mannonate = 2-dehydro-3-deoxy-D-gluconate + H2O. The protein operates within carbohydrate metabolism; pentose and glucuronate interconversion. Its function is as follows. Catalyzes the dehydration of D-mannonate. This Levilactobacillus brevis (strain ATCC 367 / BCRC 12310 / CIP 105137 / JCM 1170 / LMG 11437 / NCIMB 947 / NCTC 947) (Lactobacillus brevis) protein is Mannonate dehydratase.